The chain runs to 296 residues: Polyamine aminopropyltransferase (296 aa).

The 236-residue stretch at 16 to 251 (HLWYFEYYTG…GMWSYTFASK (236 aa)) folds into the PABS domain. Glutamine 46 contributes to the S-methyl-5'-thioadenosine binding site. Spermidine-binding residues include histidine 77 and aspartate 101. Residues glutamate 121 and 152–153 (NG) contribute to the S-methyl-5'-thioadenosine site. Aspartate 170 functions as the Proton acceptor in the catalytic mechanism. 170–173 (DSTD) contacts spermidine.

This sequence belongs to the spermidine/spermine synthase family. Homodimer or homotetramer.

It localises to the cytoplasm. The catalysed reaction is S-adenosyl 3-(methylsulfanyl)propylamine + putrescine = S-methyl-5'-thioadenosine + spermidine + H(+). The protein operates within amine and polyamine biosynthesis; spermidine biosynthesis; spermidine from putrescine: step 1/1. In terms of biological role, catalyzes the irreversible transfer of a propylamine group from the amino donor S-adenosylmethioninamine (decarboxy-AdoMet) to putrescine (1,4-diaminobutane) to yield spermidine. This chain is Polyamine aminopropyltransferase, found in Thermotoga petrophila (strain ATCC BAA-488 / DSM 13995 / JCM 10881 / RKU-1).